The following is a 198-amino-acid chain: IMP cyclohydrolase (198 aa).

Belongs to the archaeal IMP cyclohydrolase family.

The catalysed reaction is IMP + H2O = 5-formamido-1-(5-phospho-D-ribosyl)imidazole-4-carboxamide. Its pathway is purine metabolism; IMP biosynthesis via de novo pathway; IMP from 5-formamido-1-(5-phospho-D-ribosyl)imidazole-4-carboxamide: step 1/1. Its function is as follows. Catalyzes the cyclization of 5-formylamidoimidazole-4-carboxamide ribonucleotide to IMP. In Methanopyrus kandleri (strain AV19 / DSM 6324 / JCM 9639 / NBRC 100938), this protein is IMP cyclohydrolase.